A 503-amino-acid polypeptide reads, in one-letter code: Cobyric acid synthase (503 aa).

A GATase cobBQ-type domain is found at 255–444 (AIDVAVIRCP…MHDLFHNDAF (190 aa)). Cys-337 (nucleophile) is an active-site residue. Residue His-436 is part of the active site.

Belongs to the CobB/CobQ family. CobQ subfamily.

The protein operates within cofactor biosynthesis; adenosylcobalamin biosynthesis. Functionally, catalyzes amidations at positions B, D, E, and G on adenosylcobyrinic A,C-diamide. NH(2) groups are provided by glutamine, and one molecule of ATP is hydrogenolyzed for each amidation. The polypeptide is Cobyric acid synthase (Geobacillus kaustophilus (strain HTA426)).